Reading from the N-terminus, the 296-residue chain is Phosphate transport system permease protein PstA (296 aa).

Over 1 to 28 (MAMVEMQTTAALAESRRKMQARRRLKNR) the chain is Cytoplasmic. A helical membrane pass occupies residues 29 to 50 (IALTLSMATMAFGLFWLIWILM). At 51–82 (STITRGIDGMSLALFTEMTPPPNTEGGGLANA) the chain is on the periplasmic side. A helical transmembrane segment spans residues 83 to 102 (LAGSGLLILWATVFGTPLGI). Positions 83–286 (LAGSGLLILW…LCVLLLNILA (204 aa)) constitute an ABC transmembrane type-1 domain. At 103–126 (MAGIYLAEYGRKSWLAEVIRFIND) the chain is on the cytoplasmic side. The chain crosses the membrane as a helical span at residues 127 to 146 (ILLSAPSIVVGLFVYTIVVA). The Periplasmic portion of the chain corresponds to 147–150 (QMEH). Residues 151–169 (FSGWAGVIALALLQVPIVI) form a helical membrane-spanning segment. Over 170–204 (RTTENMLKLVPYSLREAAYALGTPKWKMISAITLK) the chain is Cytoplasmic. The chain crosses the membrane as a helical span at residues 205 to 223 (ASVSGIMTGILLAIARIAG). Residues 224 to 266 (ETAPLLFTALSNQFWSTDMMQPIANLPVTIFKFAMSPFAEWQQ) are Periplasmic-facing. Residues 267–286 (LAWAGVLIITLCVLLLNILA) form a helical membrane-spanning segment. At 287–296 (RVVFAKNKHG) the chain is on the cytoplasmic side.

Belongs to the binding-protein-dependent transport system permease family. CysTW subfamily.

It localises to the cell inner membrane. Part of the binding-protein-dependent transport system for phosphate; probably responsible for the translocation of the substrate across the membrane. The polypeptide is Phosphate transport system permease protein PstA (pstA) (Escherichia coli (strain K12)).